A 373-amino-acid polypeptide reads, in one-letter code: MNAPGTFTLGPGDGSARTARLTTAHGEIETPVFMPVGTQGTVKSLCPTDLQDIKARIILGNTYHLYLRPGDELVAKLGGLHRFMGWDGPILTDSGGFQVFSLSGLRRITEEGVTFASHIDGSKHLFSPEKVVSIQRNLGSDIMMVLDECVPYGADRAYTEKSLGLTTRWARRCRKAHPAGDRGQLMFGIVQGGFFKDLRAQSAEQIIEVGFDGYALGGLSVGESRAEMYDILGDAAPLLPADRPRYLMGVGAPRDLLAGMAAGIDMFDCVLPTRNARNGTLFTFQGKVNIKRAEYREDDSPLDPTCPCYACRTFSRAYLRHLYIAKELLSYRLNTLHNLTFFSIMMERARQAIREGRFAAYRAEMEALYPEGE.

The active-site Proton acceptor is Asp93. Residues 93–97 (DSGGF), Asp147, Gln191, and Gly218 contribute to the substrate site. Positions 249-255 (GVGAPRD) are RNA binding. Asp268 acts as the Nucleophile in catalysis. The segment at 273–277 (TRNAR) is RNA binding; important for wobble base 34 recognition. Zn(2+)-binding residues include Cys306, Cys308, Cys311, and His337.

The protein belongs to the queuine tRNA-ribosyltransferase family. As to quaternary structure, homodimer. Within each dimer, one monomer is responsible for RNA recognition and catalysis, while the other monomer binds to the replacement base PreQ1. Requires Zn(2+) as cofactor.

It carries out the reaction 7-aminomethyl-7-carbaguanine + guanosine(34) in tRNA = 7-aminomethyl-7-carbaguanosine(34) in tRNA + guanine. Its pathway is tRNA modification; tRNA-queuosine biosynthesis. In terms of biological role, catalyzes the base-exchange of a guanine (G) residue with the queuine precursor 7-aminomethyl-7-deazaguanine (PreQ1) at position 34 (anticodon wobble position) in tRNAs with GU(N) anticodons (tRNA-Asp, -Asn, -His and -Tyr). Catalysis occurs through a double-displacement mechanism. The nucleophile active site attacks the C1' of nucleotide 34 to detach the guanine base from the RNA, forming a covalent enzyme-RNA intermediate. The proton acceptor active site deprotonates the incoming PreQ1, allowing a nucleophilic attack on the C1' of the ribose to form the product. After dissociation, two additional enzymatic reactions on the tRNA convert PreQ1 to queuine (Q), resulting in the hypermodified nucleoside queuosine (7-(((4,5-cis-dihydroxy-2-cyclopenten-1-yl)amino)methyl)-7-deazaguanosine). In Solidesulfovibrio magneticus (strain ATCC 700980 / DSM 13731 / RS-1) (Desulfovibrio magneticus), this protein is Queuine tRNA-ribosyltransferase.